A 312-amino-acid polypeptide reads, in one-letter code: Flavonol 3-sulfotransferase (312 aa).

59 to 64 contacts 3'-phosphoadenylyl sulfate; the sequence is KSGTTW. Histidine 119 (proton acceptor) is an active-site residue. 3'-phosphoadenylyl sulfate contacts are provided by residues arginine 141, serine 149, tyrosine 207, and 277-279; that span reads RKG.

This sequence belongs to the sulfotransferase 1 family. As to expression, highest in shoot tips and lowest in mature leaves and roots.

Its subcellular location is the cytoplasm. In terms of biological role, sulfotransferase that utilizes 3'-phospho-5'-adenylyl sulfate (PAPS) as sulfonate donor to catalyze the sulfate conjugation of quercetin, rhamnetin and isorhamnetin but not kaempferol. O-sulfation of position 3 of flavonol. May play a role in auxin transport. In Flaveria bidentis (Coastal plain yellowtops), this protein is Flavonol 3-sulfotransferase.